The sequence spans 118 residues: Small ribosomal subunit protein uS13 (118 aa).

Positions 94–118 (GLPVRGQRTKTNARTRKGPRKPIRK) are disordered.

It belongs to the universal ribosomal protein uS13 family. In terms of assembly, part of the 30S ribosomal subunit. Forms a loose heterodimer with protein S19. Forms two bridges to the 50S subunit in the 70S ribosome.

Located at the top of the head of the 30S subunit, it contacts several helices of the 16S rRNA. In the 70S ribosome it contacts the 23S rRNA (bridge B1a) and protein L5 of the 50S subunit (bridge B1b), connecting the 2 subunits; these bridges are implicated in subunit movement. Contacts the tRNAs in the A and P-sites. In Marinobacter nauticus (strain ATCC 700491 / DSM 11845 / VT8) (Marinobacter aquaeolei), this protein is Small ribosomal subunit protein uS13.